We begin with the raw amino-acid sequence, 195 residues long: ATP-dependent Clp protease proteolytic subunit (195 aa).

Catalysis depends on serine 101, which acts as the Nucleophile. Residue histidine 126 is part of the active site.

It belongs to the peptidase S14 family. As to quaternary structure, component of the chloroplastic Clp protease core complex.

It localises to the plastid. Its subcellular location is the chloroplast stroma. The enzyme catalyses Hydrolysis of proteins to small peptides in the presence of ATP and magnesium. alpha-casein is the usual test substrate. In the absence of ATP, only oligopeptides shorter than five residues are hydrolyzed (such as succinyl-Leu-Tyr-|-NHMec, and Leu-Tyr-Leu-|-Tyr-Trp, in which cleavage of the -Tyr-|-Leu- and -Tyr-|-Trp bonds also occurs).. Cleaves peptides in various proteins in a process that requires ATP hydrolysis. Has a chymotrypsin-like activity. Plays a major role in the degradation of misfolded proteins. The sequence is that of ATP-dependent Clp protease proteolytic subunit from Oltmannsiellopsis viridis (Marine flagellate).